A 503-amino-acid polypeptide reads, in one-letter code: Glutamate--tRNA ligase (503 aa).

Residues 9 to 19 (PSPTGDPHVGT) carry the 'HIGH' region motif. The short motif at 251–255 (KLSKR) is the 'KMSKS' region element. Lys254 contributes to the ATP binding site.

It belongs to the class-I aminoacyl-tRNA synthetase family. Glutamate--tRNA ligase type 1 subfamily. Monomer.

The protein localises to the cytoplasm. It carries out the reaction tRNA(Glu) + L-glutamate + ATP = L-glutamyl-tRNA(Glu) + AMP + diphosphate. Its function is as follows. Catalyzes the attachment of glutamate to tRNA(Glu) in a two-step reaction: glutamate is first activated by ATP to form Glu-AMP and then transferred to the acceptor end of tRNA(Glu). The protein is Glutamate--tRNA ligase of Saccharophagus degradans (strain 2-40 / ATCC 43961 / DSM 17024).